The chain runs to 78 residues: Ubiquinol-cytochrome-c reductase complex assembly factor 3 (78 aa).

Topologically, residues 1 to 5 are mitochondrial matrix; the sequence is MSGMR. Residues 6–26 traverse the membrane as a helical segment; sequence ILTGSVALGGLTYAIWIIFSP. Over 27 to 78 the chain is Mitochondrial intermembrane; that stretch reads GEERKKEILKSLPEANPVRMEETRKRNAIMLQVLKDAAETNDNIARGFGSQK.

Belongs to the UQCC3 family. As to quaternary structure, associates with the ubiquinol-cytochrome c reductase complex (mitochondrial respiratory chain complex III or cytochrome b-c1 complex).

It localises to the mitochondrion inner membrane. In terms of biological role, required for the assembly of the ubiquinol-cytochrome c reductase complex (mitochondrial respiratory chain complex III or cytochrome b-c1 complex), mediating cytochrome b recruitment and probably stabilization within the complex. Thereby, plays an important role in ATP production by mitochondria. Cardiolipin-binding protein, it may also control the cardiolipin composition of mitochondria membranes and their morphology. The sequence is that of Ubiquinol-cytochrome-c reductase complex assembly factor 3 from Danio rerio (Zebrafish).